The primary structure comprises 327 residues: tRNA N6-adenosine threonylcarbamoyltransferase (327 aa).

Residues His-107 and His-111 each coordinate Fe cation. Residues Leu-129–Gly-133, Asp-162, Gly-175, and Asn-263 contribute to the substrate site. Asp-291 lines the Fe cation pocket.

It belongs to the KAE1 / TsaD family. Fe(2+) is required as a cofactor.

It localises to the cytoplasm. It catalyses the reaction L-threonylcarbamoyladenylate + adenosine(37) in tRNA = N(6)-L-threonylcarbamoyladenosine(37) in tRNA + AMP + H(+). Required for the formation of a threonylcarbamoyl group on adenosine at position 37 (t(6)A37) in tRNAs that read codons beginning with adenine. Is involved in the transfer of the threonylcarbamoyl moiety of threonylcarbamoyl-AMP (TC-AMP) to the N6 group of A37, together with TsaE and TsaB. TsaD likely plays a direct catalytic role in this reaction. This chain is tRNA N6-adenosine threonylcarbamoyltransferase, found in Nautilia profundicola (strain ATCC BAA-1463 / DSM 18972 / AmH).